Reading from the N-terminus, the 392-residue chain is MDQDMGMATGYFQDADMQMDEPAAATQSIYPHSATLFAAISACVFVTIGVLGNLITLLALLKSPTIREHATTAFVISLSISDLLFCSFSLPLTAVRFFQESWTFGTTLCKIFPVIFYGNVAVSLLSMVGITLNRYILIACHSRYSQIYKPKFITLQLLFVWAVSFLLLLPPILGIWGEMGLDEATFSCTILKKEGRSIKKTLFVIGFLLPCLVIIVSYSCIYITVLHQKKKIRNHDNFQIAAAKGSSSSGGGSYMTTTCTRKAREDNRLTVMMVTIFLCFLVCFLPLMLANVVDDERNTSYPWLHIIASVMAWASSVINPIIYAASNRNYRVAYYKIFALLKFWGEPLSPMPSRNYHQSKNSKELSGVIRSTPLFHAVQKNSINQMCQTYSV.

Residues 1–39 (MDQDMGMATGYFQDADMQMDEPAAATQSIYPHSATLFAA) are Extracellular-facing. A helical membrane pass occupies residues 40–60 (ISACVFVTIGVLGNLITLLAL). Residues 61–73 (LKSPTIREHATTA) lie on the Cytoplasmic side of the membrane. The chain crosses the membrane as a helical span at residues 74–94 (FVISLSISDLLFCSFSLPLTA). Residues 95–110 (VRFFQESWTFGTTLCK) lie on the Extracellular side of the membrane. A helical transmembrane segment spans residues 111–131 (IFPVIFYGNVAVSLLSMVGIT). Topologically, residues 132–156 (LNRYILIACHSRYSQIYKPKFITLQ) are cytoplasmic. Residues 157–177 (LLFVWAVSFLLLLPPILGIWG) form a helical membrane-spanning segment. Residues 178–202 (EMGLDEATFSCTILKKEGRSIKKTL) lie on the Extracellular side of the membrane. Residues 203 to 223 (FVIGFLLPCLVIIVSYSCIYI) traverse the membrane as a helical segment. Residues 224 to 268 (TVLHQKKKIRNHDNFQIAAAKGSSSSGGGSYMTTTCTRKAREDNR) are Cytoplasmic-facing. Residues 269 to 289 (LTVMMVTIFLCFLVCFLPLML) form a helical membrane-spanning segment. The Extracellular segment spans residues 290-302 (ANVVDDERNTSYP). A glycan (N-linked (GlcNAc...) asparagine) is linked at asparagine 298. A helical membrane pass occupies residues 303 to 323 (WLHIIASVMAWASSVINPIIY). At 324 to 392 (AASNRNYRVA…INQMCQTYSV (69 aa)) the chain is on the cytoplasmic side. 3 positions are modified to phosphoserine: serine 359, serine 362, and serine 366. Threonine 372 carries the post-translational modification Phosphothreonine.

Belongs to the G-protein coupled receptor 1 family. As to expression, in embryos, expression is seen at highest levels in the cuprophilic cells and at lower levels in the amnioserosa, developing CNS, cardiac mesoderm primordium and midline glia.

It localises to the cell membrane. In terms of biological role, essential for the first active step of germ cell migration: transepithelial migration of germ cells through the posterior midgut (PMG) epithelium. The polypeptide is Protein trapped in endoderm-1 (Tre1) (Drosophila melanogaster (Fruit fly)).